Consider the following 472-residue polypeptide: ATP-dependent rRNA helicase rrp3 (472 aa).

The interval 1-51 (MPDVKKRKIAHEAPEHGSDAESTSSHESVAQQDDTAETQDEAAATETRPAP) is disordered. Basic and acidic residues predominate over residues 10–19 (AHEAPEHGSD). Positions 20 to 29 (AESTSSHESV) are enriched in polar residues. The Q motif signature appears at 52 to 80 (KSFKDLGIIDQLCEACETMGYKAPTPIQA). Positions 83–254 (IPLALQGRDL…RASLSNPLRV (172 aa)) constitute a Helicase ATP-binding domain. ATP is bound at residue 96–103 (AETGSGKT). Residues 202–205 (DEAD) carry the DEAD box motif. Residues 282–426 (YLVYLLNEFV…EYELEKDEVM (145 aa)) form the Helicase C-terminal domain. The tract at residues 451-472 (GTKAKKFGKGKRSRDEMDQEEG) is disordered. Basic residues predominate over residues 452–462 (TKAKKFGKGKR).

Belongs to the DEAD box helicase family. DDX47/RRP3 subfamily. Interacts with the SSU processome.

Its subcellular location is the nucleus. The catalysed reaction is ATP + H2O = ADP + phosphate + H(+). ATP-dependent rRNA helicase required for pre-ribosomal RNA processing. Involved in the maturation of the 35S-pre-rRNA and to its cleavage to mature 18S rRNA. The polypeptide is ATP-dependent rRNA helicase rrp3 (Neosartorya fischeri (strain ATCC 1020 / DSM 3700 / CBS 544.65 / FGSC A1164 / JCM 1740 / NRRL 181 / WB 181) (Aspergillus fischerianus)).